The chain runs to 180 residues: Large ribosomal subunit protein uL5 (180 aa).

This sequence belongs to the universal ribosomal protein uL5 family. Part of the 50S ribosomal subunit; part of the 5S rRNA/L5/L18/L25 subcomplex. Contacts the 5S rRNA and the P site tRNA. Forms a bridge to the 30S subunit in the 70S ribosome.

Functionally, this is one of the proteins that bind and probably mediate the attachment of the 5S RNA into the large ribosomal subunit, where it forms part of the central protuberance. In the 70S ribosome it contacts protein S13 of the 30S subunit (bridge B1b), connecting the 2 subunits; this bridge is implicated in subunit movement. Contacts the P site tRNA; the 5S rRNA and some of its associated proteins might help stabilize positioning of ribosome-bound tRNAs. This is Large ribosomal subunit protein uL5 from Heliobacterium modesticaldum (strain ATCC 51547 / Ice1).